The chain runs to 113 residues: Large ribosomal subunit protein uL22 (113 aa).

The protein belongs to the universal ribosomal protein uL22 family. Part of the 50S ribosomal subunit.

Functionally, this protein binds specifically to 23S rRNA; its binding is stimulated by other ribosomal proteins, e.g. L4, L17, and L20. It is important during the early stages of 50S assembly. It makes multiple contacts with different domains of the 23S rRNA in the assembled 50S subunit and ribosome. Its function is as follows. The globular domain of the protein is located near the polypeptide exit tunnel on the outside of the subunit, while an extended beta-hairpin is found that lines the wall of the exit tunnel in the center of the 70S ribosome. The polypeptide is Large ribosomal subunit protein uL22 (Bacillus subtilis (strain 168)).